A 315-amino-acid chain; its full sequence is Ribose-phosphate pyrophosphokinase (315 aa).

ATP-binding positions include 37–39 and 96–97; these read DGE and RQ. 2 residues coordinate Mg(2+): His-131 and Asp-171. The active site involves Lys-195. Residues Arg-197, Asp-221, and 225 to 229 each bind D-ribose 5-phosphate; that span reads DTGGT.

The protein belongs to the ribose-phosphate pyrophosphokinase family. Class I subfamily. As to quaternary structure, homohexamer. The cofactor is Mg(2+).

It localises to the cytoplasm. The catalysed reaction is D-ribose 5-phosphate + ATP = 5-phospho-alpha-D-ribose 1-diphosphate + AMP + H(+). Its pathway is metabolic intermediate biosynthesis; 5-phospho-alpha-D-ribose 1-diphosphate biosynthesis; 5-phospho-alpha-D-ribose 1-diphosphate from D-ribose 5-phosphate (route I): step 1/1. Its function is as follows. Involved in the biosynthesis of the central metabolite phospho-alpha-D-ribosyl-1-pyrophosphate (PRPP) via the transfer of pyrophosphoryl group from ATP to 1-hydroxyl of ribose-5-phosphate (Rib-5-P). In Haemophilus influenzae (strain ATCC 51907 / DSM 11121 / KW20 / Rd), this protein is Ribose-phosphate pyrophosphokinase.